The chain runs to 173 residues: Methylated-DNA--protein-cysteine methyltransferase (173 aa).

Catalysis depends on cysteine 143, which acts as the Nucleophile; methyl group acceptor.

This sequence belongs to the MGMT family.

It localises to the cytoplasm. The catalysed reaction is a 6-O-methyl-2'-deoxyguanosine in DNA + L-cysteinyl-[protein] = S-methyl-L-cysteinyl-[protein] + a 2'-deoxyguanosine in DNA. The enzyme catalyses a 4-O-methyl-thymidine in DNA + L-cysteinyl-[protein] = a thymidine in DNA + S-methyl-L-cysteinyl-[protein]. Involved in the cellular defense against the biological effects of O6-methylguanine (O6-MeG) and O4-methylthymine (O4-MeT) in DNA. Repairs the methylated nucleobase in DNA by stoichiometrically transferring the methyl group to a cysteine residue in the enzyme. This is a suicide reaction: the enzyme is irreversibly inactivated. The polypeptide is Methylated-DNA--protein-cysteine methyltransferase (Pyrococcus sp. (strain NA2)).